A 352-amino-acid polypeptide reads, in one-letter code: UDP-N-acetylglucosamine--N-acetylmuramyl-(pentapeptide) pyrophosphoryl-undecaprenol N-acetylglucosamine transferase (352 aa).

Positions 195 and 287 each coordinate UDP-N-acetyl-alpha-D-glucosamine.

Belongs to the glycosyltransferase 28 family. MurG subfamily.

The protein resides in the cell membrane. The enzyme catalyses Mur2Ac(oyl-L-Ala-gamma-D-Glu-L-Lys-D-Ala-D-Ala)-di-trans,octa-cis-undecaprenyl diphosphate + UDP-N-acetyl-alpha-D-glucosamine = beta-D-GlcNAc-(1-&gt;4)-Mur2Ac(oyl-L-Ala-gamma-D-Glu-L-Lys-D-Ala-D-Ala)-di-trans,octa-cis-undecaprenyl diphosphate + UDP + H(+). The protein operates within cell wall biogenesis; peptidoglycan biosynthesis. Its function is as follows. Cell wall formation. Catalyzes the transfer of a GlcNAc subunit on undecaprenyl-pyrophosphoryl-MurNAc-pentapeptide (lipid intermediate I) to form undecaprenyl-pyrophosphoryl-MurNAc-(pentapeptide)GlcNAc (lipid intermediate II). This is UDP-N-acetylglucosamine--N-acetylmuramyl-(pentapeptide) pyrophosphoryl-undecaprenol N-acetylglucosamine transferase from Streptococcus pneumoniae (strain Taiwan19F-14).